Reading from the N-terminus, the 147-residue chain is Deoxyuridine 5'-triphosphate nucleotidohydrolase (147 aa).

Residues 63–65 (RSG), Asn-76, and 80–82 (TID) each bind substrate.

It belongs to the dUTPase family. Requires Mg(2+) as cofactor.

It catalyses the reaction dUTP + H2O = dUMP + diphosphate + H(+). It participates in pyrimidine metabolism; dUMP biosynthesis; dUMP from dCTP (dUTP route): step 2/2. Functionally, this enzyme is involved in nucleotide metabolism: it produces dUMP, the immediate precursor of thymidine nucleotides and it decreases the intracellular concentration of dUTP so that uracil cannot be incorporated into DNA. This is Deoxyuridine 5'-triphosphate nucleotidohydrolase from Chlamydia felis (strain Fe/C-56) (Chlamydophila felis).